Reading from the N-terminus, the 216-residue chain is Pyridoxine/pyridoxamine 5'-phosphate oxidase 1 (216 aa).

Substrate is bound by residues 10-13 and Lys-68; that span reads RREY. Residues 63–68, 78–79, Lys-85, and Gln-107 each bind FMN; these read RIVLLK and YT. Residues Tyr-125, Arg-129, and Ser-133 each coordinate substrate. FMN-binding positions include 142–143 and Trp-186; that span reads QS. 192-194 is a substrate binding site; that stretch reads RLH. Arg-196 serves as a coordination point for FMN.

This sequence belongs to the pyridoxamine 5'-phosphate oxidase family. Homodimer. FMN is required as a cofactor.

It catalyses the reaction pyridoxamine 5'-phosphate + O2 + H2O = pyridoxal 5'-phosphate + H2O2 + NH4(+). It carries out the reaction pyridoxine 5'-phosphate + O2 = pyridoxal 5'-phosphate + H2O2. The protein operates within cofactor metabolism; pyridoxal 5'-phosphate salvage; pyridoxal 5'-phosphate from pyridoxamine 5'-phosphate: step 1/1. It functions in the pathway cofactor metabolism; pyridoxal 5'-phosphate salvage; pyridoxal 5'-phosphate from pyridoxine 5'-phosphate: step 1/1. Catalyzes the oxidation of either pyridoxine 5'-phosphate (PNP) or pyridoxamine 5'-phosphate (PMP) into pyridoxal 5'-phosphate (PLP). This Hydrogenovibrio crunogenus (strain DSM 25203 / XCL-2) (Thiomicrospira crunogena) protein is Pyridoxine/pyridoxamine 5'-phosphate oxidase 1.